A 362-amino-acid polypeptide reads, in one-letter code: S-adenosylmethionine:tRNA ribosyltransferase-isomerase (362 aa).

The protein belongs to the QueA family. Monomer.

Its subcellular location is the cytoplasm. It carries out the reaction 7-aminomethyl-7-carbaguanosine(34) in tRNA + S-adenosyl-L-methionine = epoxyqueuosine(34) in tRNA + adenine + L-methionine + 2 H(+). It participates in tRNA modification; tRNA-queuosine biosynthesis. Transfers and isomerizes the ribose moiety from AdoMet to the 7-aminomethyl group of 7-deazaguanine (preQ1-tRNA) to give epoxyqueuosine (oQ-tRNA). The sequence is that of S-adenosylmethionine:tRNA ribosyltransferase-isomerase from Xanthobacter autotrophicus (strain ATCC BAA-1158 / Py2).